A 183-amino-acid polypeptide reads, in one-letter code: Early E3 20.2 kDa glycoprotein (183 aa).

N-linked (GlcNAc...) asparagine; by host glycosylation is found at asparagine 30, asparagine 73, asparagine 117, asparagine 134, and asparagine 135.

It belongs to the adenoviridae E3_20 family.

This Homo sapiens (Human) protein is Early E3 20.2 kDa glycoprotein.